We begin with the raw amino-acid sequence, 216 residues long: Small ribosomal subunit protein uS3c (216 aa).

In terms of domain architecture, KH type-2 spans 43 to 118 (IKNYIQKNRR…KLNIAIVKVT (76 aa)).

It belongs to the universal ribosomal protein uS3 family. In terms of assembly, part of the 30S ribosomal subunit.

It is found in the plastid. The protein resides in the chloroplast. In Phaseolus angularis (Azuki bean), this protein is Small ribosomal subunit protein uS3c (rps3).